The sequence spans 187 residues: Shikimate kinase (187 aa).

Residue 14-19 participates in ATP binding; that stretch reads GSGKST. Mg(2+) is bound at residue serine 18. Aspartate 36, arginine 60, and glycine 82 together coordinate substrate. Arginine 120 is a binding site for ATP. Substrate is bound at residue arginine 147.

Belongs to the shikimate kinase family. As to quaternary structure, monomer. Mg(2+) is required as a cofactor.

It localises to the cytoplasm. The enzyme catalyses shikimate + ATP = 3-phosphoshikimate + ADP + H(+). It functions in the pathway metabolic intermediate biosynthesis; chorismate biosynthesis; chorismate from D-erythrose 4-phosphate and phosphoenolpyruvate: step 5/7. In terms of biological role, catalyzes the specific phosphorylation of the 3-hydroxyl group of shikimic acid using ATP as a cosubstrate. In Chlorobaculum parvum (strain DSM 263 / NCIMB 8327) (Chlorobium vibrioforme subsp. thiosulfatophilum), this protein is Shikimate kinase.